Here is a 250-residue protein sequence, read N- to C-terminus: Proteasome subunit alpha type-2 (250 aa).

Lysine 108 is covalently cross-linked (Glycyl lysine isopeptide (Lys-Gly) (interchain with G-Cter in ubiquitin)).

Belongs to the peptidase T1A family. The 26S proteasome consists of a 20S proteasome core and two 19S regulatory subunits. The 20S proteasome core is composed of 28 subunits that are arranged in four stacked rings, resulting in a barrel-shaped structure. The two end rings are each formed by seven alpha subunits, and the two central rings are each formed by seven beta subunits. The catalytic chamber with the active sites is on the inside of the barrel.

It localises to the cytoplasm. The protein resides in the nucleus. Functionally, the proteasome degrades poly-ubiquitinated proteins in the cytoplasm and in the nucleus. It is essential for the regulated turnover of proteins and for the removal of misfolded proteins. The proteasome is a multicatalytic proteinase complex that is characterized by its ability to cleave peptides with Arg, Phe, Tyr, Leu, and Glu adjacent to the leaving group at neutral or slightly basic pH. It has an ATP-dependent proteolytic activity. This chain is Proteasome subunit alpha type-2 (PRE8), found in Saccharomyces cerevisiae (strain ATCC 204508 / S288c) (Baker's yeast).